We begin with the raw amino-acid sequence, 383 residues long: tRNA(Met) cytidine acetate ligase (383 aa).

Residues 7–20 (ITEYNPLHNGHRYH), G101, N150, and R175 contribute to the ATP site.

It belongs to the TmcAL family.

The protein localises to the cytoplasm. It catalyses the reaction cytidine(34) in elongator tRNA(Met) + acetate + ATP = N(4)-acetylcytidine(34) in elongator tRNA(Met) + AMP + diphosphate. Catalyzes the formation of N(4)-acetylcytidine (ac(4)C) at the wobble position of elongator tRNA(Met), using acetate and ATP as substrates. First activates an acetate ion to form acetyladenylate (Ac-AMP) and then transfers the acetyl group to tRNA to form ac(4)C34. The polypeptide is tRNA(Met) cytidine acetate ligase (Lactiplantibacillus plantarum (strain ATCC BAA-793 / NCIMB 8826 / WCFS1) (Lactobacillus plantarum)).